The primary structure comprises 507 residues: MWELVGLLLLILAYFFWVKSKTPGAKLPRSLPSLPLVGSLPFLPRRGHMHVNFFKLQEKYGPIYSLRLGTTTTVIIGHYQLAREVLIKKGKEFSGRPQMVTQSLLSDQGKGVAFADAGSSWHLHRKLVFSTFSLFKDGQKLEKLICQEAKSLCDMMLAHDKESIDLSTPIFMSVTNIICAICFNISYEKNDPKLTAIKTFTEGIVDATGDRNLVDIFPWLTIFPNKGLEVIKGYAKVRNEVLTGIFEKCREKFDSQSISSLTDILIQAKMNSDNNNSCEGRDPDVFSDRHILATVGDIFGAGIETTTTVLKWILAFLVHNPEVKKKIQKEIDQYVGFSRTPTFNDRSHLLMLEATIREVLRIRPVAPMLIPHKANVDSSIGEFTVPKDTHVVVNLWALHHDENEWDQPDQFMPERFLDPTGSHLITPTQSYLPFGAGPRSCIGEALARQELFVFTALLLQRFDLDVSDDKQLPRLEGDPKVVFLIDPFKVKITVRQAWMDAQAEVST.

Cysteine 441 is a binding site for heme.

The protein belongs to the cytochrome P450 family. Heme is required as a cofactor.

It is found in the endoplasmic reticulum membrane. The protein localises to the microsome membrane. The catalysed reaction is a C21-steroid + reduced [NADPH--hemoprotein reductase] + O2 = a 17alpha-hydroxy-C21-steroid + oxidized [NADPH--hemoprotein reductase] + H2O + H(+). It carries out the reaction progesterone + reduced [NADPH--hemoprotein reductase] + O2 = 17alpha-hydroxyprogesterone + oxidized [NADPH--hemoprotein reductase] + H2O + H(+). It catalyses the reaction pregnenolone + reduced [NADPH--hemoprotein reductase] + O2 = 17alpha-hydroxypregnenolone + oxidized [NADPH--hemoprotein reductase] + H2O + H(+). The enzyme catalyses 17alpha-hydroxyprogesterone + reduced [NADPH--hemoprotein reductase] + O2 = androst-4-ene-3,17-dione + acetate + oxidized [NADPH--hemoprotein reductase] + H2O + 2 H(+). The catalysed reaction is 17alpha-hydroxyprogesterone + reduced [NADPH--hemoprotein reductase] + O2 = 16alpha,17alpha-dihydroxyprogesterone + oxidized [NADPH--hemoprotein reductase] + H2O + H(+). It carries out the reaction 16alpha,17alpha-dihydroxyprogesterone + reduced [NADPH--hemoprotein reductase] + O2 = 6beta,16alpha,17alpha-trihydroxyprogesterone + oxidized [NADPH--hemoprotein reductase] + H2O + H(+). It catalyses the reaction 17alpha-hydroxypregnenolone + reduced [NADPH--hemoprotein reductase] + O2 = 3beta-hydroxyandrost-5-en-17-one + acetate + oxidized [NADPH--hemoprotein reductase] + H2O + 2 H(+). The enzyme catalyses 16alpha,17alpha-dihydroxypregnenolone + reduced [NADPH--hemoprotein reductase] + O2 = 3beta,16alpha-dihydroxy-androst-5-en-17-one + acetate + oxidized [NADPH--hemoprotein reductase] + H2O + 2 H(+). The catalysed reaction is 3beta-hydroxyandrost-5-en-17-one + reduced [NADPH--hemoprotein reductase] + O2 = 3beta,16alpha-dihydroxy-androst-5-en-17-one + oxidized [NADPH--hemoprotein reductase] + H2O + H(+). It carries out the reaction androst-4-ene-3,17-dione + reduced [NADPH--hemoprotein reductase] + O2 = 16alpha-hydroxyandrost-4-ene-3,17-dione + oxidized [NADPH--hemoprotein reductase] + H2O + H(+). It functions in the pathway steroid hormone biosynthesis. It participates in steroid biosynthesis; glucocorticoid biosynthesis. With respect to regulation, regulated predominantly by intracellular cAMP levels. The 17,20-lyase activity is stimulated by cytochrome b5, which acts as an allosteric effector increasing the Vmax of the lyase activity. In terms of biological role, a cytochrome P450 monooxygenase involved in corticoid and androgen biosynthesis. Catalyzes 17-alpha hydroxylation of C21 steroids, which is common for both pathways. A second oxidative step, required only for androgen synthesis, involves an acyl-carbon cleavage. The 17-alpha hydroxy intermediates, as part of adrenal glucocorticoids biosynthesis pathway, are precursors of cortisol. Hydroxylates steroid hormones, pregnenolone and progesterone to form 17-alpha hydroxy metabolites, followed by the cleavage of the C17-C20 bond to form C19 steroids, dehydroepiandrosterone (DHEA) and androstenedione. Has 16-alpha hydroxylase activity. Catalyzes 16-alpha hydroxylation of 17-alpha hydroxy pregnenolone, followed by the cleavage of the C17-C20 bond to form 16-alpha-hydroxy DHEA. Also 16-alpha hydroxylates androgens, relevant for estriol synthesis. Mechanistically, uses molecular oxygen inserting one oxygen atom into a substrate, and reducing the second into a water molecule, with two electrons provided by NADPH via cytochrome P450 reductase (CPR; NADPH-ferrihemoprotein reductase). This Rattus norvegicus (Rat) protein is Steroid 17-alpha-hydroxylase/17,20 lyase (Cyp17a1).